Consider the following 533-residue polypeptide: CTP synthase (533 aa).

Residues 1–265 (MTKFIFVTGG…PAYLARRLGL (265 aa)) form an amidoligase domain region. Ser13 lines the CTP pocket. Ser13 serves as a coordination point for UTP. 14–19 (GLGKGI) serves as a coordination point for ATP. An L-glutamine-binding site is contributed by Tyr54. Asp71 provides a ligand contact to ATP. Mg(2+) contacts are provided by Asp71 and Glu139. Residues 146–148 (DIE), 186–191 (KTKPTQ), and Lys222 each bind CTP. UTP is bound by residues 186 to 191 (KTKPTQ) and Lys222. The Glutamine amidotransferase type-1 domain maps to 290-532 (EIAIVGKYVK…VEAAKKKKYG (243 aa)). Gly351 is a binding site for L-glutamine. The Nucleophile; for glutamine hydrolysis role is filled by Cys378. Residues 379–382 (FGFQ), Glu402, and Arg459 each bind L-glutamine. Residues His505 and Glu507 contribute to the active site.

This sequence belongs to the CTP synthase family. Homotetramer.

It catalyses the reaction UTP + L-glutamine + ATP + H2O = CTP + L-glutamate + ADP + phosphate + 2 H(+). The catalysed reaction is L-glutamine + H2O = L-glutamate + NH4(+). The enzyme catalyses UTP + NH4(+) + ATP = CTP + ADP + phosphate + 2 H(+). Its pathway is pyrimidine metabolism; CTP biosynthesis via de novo pathway; CTP from UDP: step 2/2. With respect to regulation, allosterically activated by GTP, when glutamine is the substrate; GTP has no effect on the reaction when ammonia is the substrate. The allosteric effector GTP functions by stabilizing the protein conformation that binds the tetrahedral intermediate(s) formed during glutamine hydrolysis. Inhibited by the product CTP, via allosteric rather than competitive inhibition. Its function is as follows. Catalyzes the ATP-dependent amination of UTP to CTP with either L-glutamine or ammonia as the source of nitrogen. Regulates intracellular CTP levels through interactions with the four ribonucleotide triphosphates. This chain is CTP synthase, found in Thermococcus kodakarensis (strain ATCC BAA-918 / JCM 12380 / KOD1) (Pyrococcus kodakaraensis (strain KOD1)).